Consider the following 130-residue polypeptide: MAKSPSRSPRKRVRKQVADGMAHIHASFNNTIITITDRQGNALSWATSGGSGFRGSRKSTPFAAQVAAERAGVAAQDYGVKNLEVFVKGPGPGRESAIRALNSVGYKITNITDVTPIPHNGCRPPKKRRV.

Belongs to the universal ribosomal protein uS11 family. Part of the 30S ribosomal subunit. Interacts with proteins S7 and S18. Binds to IF-3.

Its function is as follows. Located on the platform of the 30S subunit, it bridges several disparate RNA helices of the 16S rRNA. Forms part of the Shine-Dalgarno cleft in the 70S ribosome. This Shewanella violacea (strain JCM 10179 / CIP 106290 / LMG 19151 / DSS12) protein is Small ribosomal subunit protein uS11.